The chain runs to 478 residues: Argininosuccinate synthase (478 aa).

Residues 17–25 and Ala43 each bind ATP; that span reads AFSGGLDTS. Residue Tyr99 participates in L-citrulline binding. ATP contacts are provided by Gly129 and Thr131. The L-aspartate site is built by Thr131, Asn135, and Asp136. Asn135 provides a ligand contact to L-citrulline. Residue Asp136 coordinates ATP. Residues Arg139 and Ser192 each contribute to the L-citrulline site. Asp194 contacts ATP. L-citrulline-binding residues include Thr201, Glu203, and Glu280.

The protein belongs to the argininosuccinate synthase family. Type 2 subfamily. Homotetramer.

The protein localises to the cytoplasm. The enzyme catalyses L-citrulline + L-aspartate + ATP = 2-(N(omega)-L-arginino)succinate + AMP + diphosphate + H(+). It functions in the pathway amino-acid biosynthesis; L-arginine biosynthesis; L-arginine from L-ornithine and carbamoyl phosphate: step 2/3. In Leifsonia xyli subsp. xyli (strain CTCB07), this protein is Argininosuccinate synthase.